The following is a 430-amino-acid chain: MTLAASSQRSQIIRSKFRSVLQLRIHRRYQDPTLSGSFTASPVLDPDPWISAADPALALAPASPLGPAPFLFNPEVLLPEPKPCWSLKKESPKTSQHWREPKPKGNLTYHQYIPPEPRQGYRADPQVEGSPLDPPGPPLWEGTTSQQPPPRMKPTPLTPSPPGVPSPSPLPHKLELQTLKLEELTVSELRQQLRLRGLPVSGTKSMLLERMRGGAPPRERPKARREDSAAGAPWPRFRPKALGAARSACSFKLSPTSHSPPPPRAVETLVTASASAPVPVATTAQAPTPAPVPVPSSAPASTALTLEEELQEAIRRAQLLPNRGIDDILEDQVEPEDPLPAIPLDFPGSFDMLSPSPDSEGLSSVFSSSLPSPTNSPSPSPRGPTDFLDWLEALSGGPSLGCGPPAPSIFSADLSDSSGTRLWDLLEDPW.

The MEF2-binding signature appears at Ile12–Arg28. Disordered stretches follow at residues Cys84–His172, Lys204–Pro239, Val280–Ser301, and Glu330–Asp416. The span at Leu87–Pro103 shows a compositional bias: basic and acidic residues. The segment covering Gln147–Leu170 has biased composition (pro residues). Positions Leu181–Ala215 constitute an SAP domain. A compositionally biased stretch (basic and acidic residues) spans Leu207–Ser228. The tract at residues Arg224–Trp430 is transcription activation. Composition is skewed to low complexity over residues Ser363–Pro373 and Ala393–Gly403.

Interacts with MEF2C.

It is found in the nucleus. Functionally, transcriptional coactivator. Stimulates the transcriptional activity of MEF2C. Stimulates MYOD1 activity in part via MEF2, resulting in an enhancement of skeletal muscle differentiation. The sequence is that of MEF2-activating motif and SAP domain-containing transcriptional regulator (MAMSTR) from Bos taurus (Bovine).